Reading from the N-terminus, the 129-residue chain is Small ribosomal subunit protein uS12 (129 aa).

D89 is subject to 3-methylthioaspartic acid.

Belongs to the universal ribosomal protein uS12 family. Part of the 30S ribosomal subunit. Contacts proteins S8 and S17. May interact with IF1 in the 30S initiation complex.

Its function is as follows. With S4 and S5 plays an important role in translational accuracy. Interacts with and stabilizes bases of the 16S rRNA that are involved in tRNA selection in the A site and with the mRNA backbone. Located at the interface of the 30S and 50S subunits, it traverses the body of the 30S subunit contacting proteins on the other side and probably holding the rRNA structure together. The combined cluster of proteins S8, S12 and S17 appears to hold together the shoulder and platform of the 30S subunit. This Helicobacter hepaticus (strain ATCC 51449 / 3B1) protein is Small ribosomal subunit protein uS12.